The following is a 20-amino-acid chain: GADFQECMKEHSQKQHQHQG.

Residues 1–13 show a composition bias toward basic and acidic residues; it reads GADFQECMKEHSQ. Residues 1 to 20 are disordered; it reads GADFQECMKEHSQKQHQHQG.

Its function is as follows. Possesses antifungal activity against B.cinerea, M.arachidicola and F.oxysporum but not C.comatus and R.solani. Inhibits HIV-1 reverse transcriptase and cell-free translation. In Basella alba (Malabar spinach), this protein is Alpha-basrubrin.